Reading from the N-terminus, the 257-residue chain is Transmembrane protein C257L (257 aa).

2 consecutive transmembrane segments (helical) span residues 123 to 143 and 163 to 183; these read LELLGYSPTPIIGGDFMFTAL and MMIFFLIILLCVILGIFYVLV.

The protein belongs to the asfivirus C257R family.

Its subcellular location is the host membrane. It localises to the virion. This is Transmembrane protein C257L from African swine fever virus (strain Badajoz 1971 Vero-adapted) (Ba71V).